The primary structure comprises 271 residues: Membrane protein insertase YidC 1 (271 aa).

A signal peptide spans 1-20; that stretch reads MKKKLKTFSLILLTGSLLVA. C21 carries N-palmitoyl cysteine lipidation. C21 carries S-diacylglycerol cysteine lipidation. Transmembrane regions (helical) follow at residues 45–65, 124–144, 163–183, and 201–221; these read IQWL…TLII, YASV…FQAL, PDPY…STWL, and VMPF…VLYW.

Belongs to the OXA1/ALB3/YidC family. Type 2 subfamily.

It is found in the cell membrane. Required for the insertion and/or proper folding and/or complex formation of integral membrane proteins into the membrane. Involved in integration of membrane proteins that insert both dependently and independently of the Sec translocase complex, as well as at least some lipoproteins. The polypeptide is Membrane protein insertase YidC 1 (Streptococcus agalactiae serotype V (strain ATCC BAA-611 / 2603 V/R)).